Consider the following 278-residue polypeptide: UPF0761 membrane protein CBU_1578 (278 aa).

A run of 7 helical transmembrane segments spans residues 38-58 (LLAL…VPAF), 68-88 (LIWE…LSQL), 92-112 (VTGL…LLMY), 134-154 (FLIY…VMLL), 177-197 (LLFV…NWVL), 207-227 (AVIG…AFTV), and 244-264 (VIPI…LGAV).

Belongs to the UPF0761 family.

It localises to the cell inner membrane. The polypeptide is UPF0761 membrane protein CBU_1578 (Coxiella burnetii (strain RSA 493 / Nine Mile phase I)).